Consider the following 225-residue polypeptide: Germin-like protein 8-3 (225 aa).

The N-terminal stretch at Met1 to Ala23 is a signal peptide. A disulfide bridge links Cys33 with Cys48. N-linked (GlcNAc...) asparagine glycosylation is found at Asn53 and Asn78. The Cupin type-1 domain maps to Phe60 to Asp213. Mn(2+) is bound by residues His111, His113, Glu118, and His158.

The protein belongs to the germin family. As to quaternary structure, oligomer (believed to be a pentamer but probably hexamer).

It is found in the secreted. The protein resides in the extracellular space. It localises to the apoplast. Plays a role in broad-spectrum disease resistance. Probably has no oxalate oxidase activity even if the active site is conserved. This chain is Germin-like protein 8-3 (GER2), found in Oryza sativa subsp. japonica (Rice).